Here is a 245-residue protein sequence, read N- to C-terminus: DNA polymerase sliding clamp 2 (245 aa).

This sequence belongs to the PCNA family. In terms of assembly, forms homodimers with PCNA1, which then recruit PCNA3; does not form homotrimers. The heterodimers interact with RfcS homotetramers. Heterotrimer which circularizes head-to-tail (head is at N-terminus, tail is at C-terminus) to form a toroid; DNA passes through its center. Replication factor C (RFC) is required to load the toroid on the DNA. This subunit interacts with DNA polymerase I (dpo1). The heterotrimer also interacts with flap endonuclease 1, DNA ligase and XPF via the other subunits.

In terms of biological role, one of the sliding clamp subunits that acts as a moving platform for DNA processing. Responsible for tethering the catalytic subunit of DNA polymerase to DNA during high-speed replication. Heterotrimer stimulates the Holliday junction resolvase Hjc. DNA polymerase I, DNA ligase and the flap endonuclease may be constitutively associated with the PCNA heterotrimer forming a scanning complex able to couple DNA synthesis and Okazaki fragment maturation. This Saccharolobus solfataricus (strain ATCC 35092 / DSM 1617 / JCM 11322 / P2) (Sulfolobus solfataricus) protein is DNA polymerase sliding clamp 2.